Here is a 546-residue protein sequence, read N- to C-terminus: CTP synthase (546 aa).

An amidoligase domain region spans residues 1–269 (MADTKYIFVT…DKVTLKKLAL (269 aa)). Ser15 contributes to the CTP binding site. Position 15 (Ser15) interacts with UTP. Residue 16–21 (SLGKGI) coordinates ATP. Tyr56 lines the L-glutamine pocket. Asp73 contacts ATP. Residues Asp73 and Glu143 each coordinate Mg(2+). CTP contacts are provided by residues 150-152 (DIE), 190-195 (KTKPTQ), and Lys226. UTP contacts are provided by residues 190 to 195 (KTKPTQ) and Lys226. The region spanning 295-537 (HIGLIGKYVE…VKAAHEHSVK (243 aa)) is the Glutamine amidotransferase type-1 domain. Gly357 serves as a coordination point for L-glutamine. The Nucleophile; for glutamine hydrolysis role is filled by Cys384. L-glutamine-binding positions include 385-388 (LGMQ), Glu408, and Arg465. Catalysis depends on residues His510 and Glu512.

Belongs to the CTP synthase family. In terms of assembly, homotetramer.

The catalysed reaction is UTP + L-glutamine + ATP + H2O = CTP + L-glutamate + ADP + phosphate + 2 H(+). The enzyme catalyses L-glutamine + H2O = L-glutamate + NH4(+). It catalyses the reaction UTP + NH4(+) + ATP = CTP + ADP + phosphate + 2 H(+). It functions in the pathway pyrimidine metabolism; CTP biosynthesis via de novo pathway; CTP from UDP: step 2/2. Its activity is regulated as follows. Allosterically activated by GTP, when glutamine is the substrate; GTP has no effect on the reaction when ammonia is the substrate. The allosteric effector GTP functions by stabilizing the protein conformation that binds the tetrahedral intermediate(s) formed during glutamine hydrolysis. Inhibited by the product CTP, via allosteric rather than competitive inhibition. Functionally, catalyzes the ATP-dependent amination of UTP to CTP with either L-glutamine or ammonia as the source of nitrogen. Regulates intracellular CTP levels through interactions with the four ribonucleotide triphosphates. The polypeptide is CTP synthase (Christiangramia forsetii (strain DSM 17595 / CGMCC 1.15422 / KT0803) (Gramella forsetii)).